Consider the following 921-residue polypeptide: Ubiquitin carboxyl-terminal hydrolase 11 (921 aa).

Residues 1–16 (MAAVAADPAAAAVPAS) show a composition bias toward low complexity. A disordered region spans residues 1–29 (MAAVAADPAAAAVPASAEDRETQPEAMPD). Residues 28–133 (PDLDQQWRQI…DQPPIERKVI (106 aa)) form the DUSP domain. An N6-acetyllysine modification is found at lysine 194. The USP domain occupies 257–889 (CGLTNLGNTC…AAYVLFYQRQ (633 aa)). Cysteine 266 serves as the catalytic Nucleophile. The interval 592-697 (TKPTSDDDDG…DRTTSPEEAQ (106 aa)) is disordered. Residue serine 596 is modified to Phosphoserine. Residues 597–624 (DDDDGDEKGDENEDEDVEDDSSSEEEKE) are compositionally biased toward acidic residues. Polar residues-rich tracts occupy residues 657–666 (LDNSLHTSQW) and 676–697 (FTLQTVNSNGTSDRTTSPEEAQ). Serine 692 carries the post-translational modification Phosphoserine. Histidine 847 serves as the catalytic Proton acceptor. A disordered region spans residues 893–921 (RRQSQTASSETPTSPASSSTPNSDIMDVN). Residues 895–915 (QSQTASSETPTSPASSSTPNS) show a composition bias toward low complexity. Serine 906 carries the post-translational modification Phosphoserine.

This sequence belongs to the peptidase C19 family. As to quaternary structure, monomer. Associated component of the Polycomb group (PcG) multiprotein PRC1-like complex. Interacts with RANBP9/RANBPM. Interacts with BRCA2. Interacts with CHUK/IKKA. Interacts with NFKBIA. Interacts with SPRY3, RAE1, MYCBP2/PAM, and KCTD6.

The protein resides in the nucleus. Its subcellular location is the cytoplasm. It localises to the chromosome. The enzyme catalyses Thiol-dependent hydrolysis of ester, thioester, amide, peptide and isopeptide bonds formed by the C-terminal Gly of ubiquitin (a 76-residue protein attached to proteins as an intracellular targeting signal).. Protease that can remove conjugated ubiquitin from target proteins and polyubiquitin chains. Inhibits the degradation of target proteins by the proteasome. Cleaves preferentially 'Lys-6' and 'Lys-63'-linked ubiquitin chains. Has lower activity with 'Lys-11' and 'Lys-33'-linked ubiquitin chains, and extremely low activity with 'Lys-27', 'Lys-29' and 'Lys-48'-linked ubiquitin chains (in vitro). Plays a role in the regulation of pathways leading to NF-kappa-B activation. Plays a role in the regulation of DNA repair after double-stranded DNA breaks. Acts as a chromatin regulator via its association with the Polycomb group (PcG) multiprotein PRC1-like complex; may act by deubiquitinating components of the PRC1-like comple. Promotes cell proliferation by deubiquitinating phosphorylated E2F1x. This is Ubiquitin carboxyl-terminal hydrolase 11 from Rattus norvegicus (Rat).